We begin with the raw amino-acid sequence, 251 residues long: Gamma-glutamyl peptidase 5 (251 aa).

A Glutamine amidotransferase type-1 domain is found at 17–214 (STFVKKAYGG…IDRVVNLKLM (198 aa)). Residue cysteine 101 is the Nucleophile of the active site. Residues histidine 193 and glutamate 195 contribute to the active site.

This sequence belongs to the peptidase C26 family.

The protein localises to the cytoplasm. The protein resides in the cytosol. Its pathway is secondary metabolite biosynthesis. Its function is as follows. Involved in glucosinolate biosynthesis. Hydrolyzes the gamma-glutamyl peptide bond of several glutathione (GSH) conjugates to produce Cys-Gly conjugates related to glucosinolates. The gamma-Glu-Cys-Gly-GSH conjugates are the sulfur-donating molecule in glucosinolate biosynthesis. The chain is Gamma-glutamyl peptidase 5 from Arabidopsis thaliana (Mouse-ear cress).